The following is a 189-amino-acid chain: uncharacterized protein (189 aa).

The HTH tetR-type domain maps to 9 to 69; the sequence is ADTGGRILRA…SMLTSHIADV (61 aa). Positions 32 to 51 form a DNA-binding region, H-T-H motif; that stretch reads TLAEIARRAGVSRPTVYRRW.

This is an uncharacterized protein from Mycobacterium tuberculosis (strain CDC 1551 / Oshkosh).